The primary structure comprises 267 residues: Acetylglutamate kinase (267 aa).

Residues 53–54 (GG), Arg75, and Asn167 each bind substrate.

Belongs to the acetylglutamate kinase family. ArgB subfamily.

It localises to the cytoplasm. The catalysed reaction is N-acetyl-L-glutamate + ATP = N-acetyl-L-glutamyl 5-phosphate + ADP. Its pathway is amino-acid biosynthesis; L-arginine biosynthesis; N(2)-acetyl-L-ornithine from L-glutamate: step 2/4. Its function is as follows. Catalyzes the ATP-dependent phosphorylation of N-acetyl-L-glutamate. This Shewanella pealeana (strain ATCC 700345 / ANG-SQ1) protein is Acetylglutamate kinase.